The primary structure comprises 258 residues: Transcription factor RSL3 (258 aa).

The D-box signature appears at 98 to 105 (RKLLDVEN). The tract at residues 119–178 (ELAKSKKKQRVSSESNTVDESNTNWVDGQSLSNSSDDEKASVTSVKGKTRATKGTATDPQ) is disordered. Polar residues predominate over residues 130–152 (SSESNTVDESNTNWVDGQSLSNS). The interval 173–186 (TATDPQSLYARKRR) is basic motif. A bHLH domain is found at 173–222 (TATDPQSLYARKRREKINERLKTLQNLVPNGTKVDISTMLEEAVHYVKFL). The segment at 187-222 (EKINERLKTLQNLVPNGTKVDISTMLEEAVHYVKFL) is helix-loop-helix motif.

In terms of assembly, homodimer. In terms of processing, ubiquitinated. Ubiquitination leads to its subsequent degradation by the 26S proteasome. In terms of tissue distribution, expressed constitutively in roots, leaves, and flowers. Expressed in root epidermal hair cells.

The protein resides in the nucleus. Its function is as follows. Transcription factor involved in the regulation of root hair elongation. Is sufficient to promote postmitotic cell growth in root-hair cells and is a direct transcriptional target of RHD6 and RSL1. Involved in the regulation of root hair elongation in response to low phosphate. Controls root hair cell growth by regulating the expression of genes encoding proteins involved in cell signaling, cell wall modification and secretion. In Arabidopsis thaliana (Mouse-ear cress), this protein is Transcription factor RSL3.